The sequence spans 226 residues: Small ribosomal subunit protein uS3 (226 aa).

The region spanning 39-107 (IRAYIKKNVV…EVTLNIKEVK (69 aa)) is the KH type-2 domain.

Belongs to the universal ribosomal protein uS3 family. As to quaternary structure, part of the 30S ribosomal subunit. Forms a tight complex with proteins S10 and S14.

Its function is as follows. Binds the lower part of the 30S subunit head. Binds mRNA in the 70S ribosome, positioning it for translation. This chain is Small ribosomal subunit protein uS3, found in Pelagibacter ubique (strain HTCC1062).